The sequence spans 305 residues: Aspartate carbamoyltransferase catalytic subunit (305 aa).

2 residues coordinate carbamoyl phosphate: Arg-56 and Thr-57. Lys-85 serves as a coordination point for L-aspartate. Arg-106, His-134, and Gln-137 together coordinate carbamoyl phosphate. 2 residues coordinate L-aspartate: Arg-167 and Arg-227. Residues Leu-266 and Pro-267 each contribute to the carbamoyl phosphate site.

Belongs to the aspartate/ornithine carbamoyltransferase superfamily. ATCase family. Heterooligomer of catalytic and regulatory chains.

It catalyses the reaction carbamoyl phosphate + L-aspartate = N-carbamoyl-L-aspartate + phosphate + H(+). The protein operates within pyrimidine metabolism; UMP biosynthesis via de novo pathway; (S)-dihydroorotate from bicarbonate: step 2/3. In terms of biological role, catalyzes the condensation of carbamoyl phosphate and aspartate to form carbamoyl aspartate and inorganic phosphate, the committed step in the de novo pyrimidine nucleotide biosynthesis pathway. The chain is Aspartate carbamoyltransferase catalytic subunit from Thermoplasma acidophilum (strain ATCC 25905 / DSM 1728 / JCM 9062 / NBRC 15155 / AMRC-C165).